A 758-amino-acid polypeptide reads, in one-letter code: Spastin (758 aa).

Residues 1-103 (MVRTKNQSSS…SPRSGHHHSY (103 aa)) are disordered. Over 1–121 (MVRTKNQSSS…KQNLYVVSFP (121 aa)) the chain is Cytoplasmic. Positions 1-210 (MVRTKNQSSS…RPIQPLEMAA (210 aa)) are required for localization to punctate cytoplasmic foci. 4 stretches are compositionally biased toward low complexity: residues 8 to 28 (SSSSSASSSSTKSPIKSSSGA), 43 to 58 (RSSSASNVAAVVAGGS), 66 to 76 (SSNRRSPGSSP), and 85 to 95 (TDDLTPTTCSP). Positions 122 to 142 (IIFLFNVLRSLIYQLFCIFRY) form an intramembrane region, helical. Topologically, residues 143–758 (LYGASTKVIY…WSQDYGDITI (616 aa)) are cytoplasmic. 2 stretches are compositionally biased toward polar residues: residues 169–180 (SKEQQQSLNHPS) and 189–198 (QEQQLSNQPQ). Residues 169-202 (SKEQQQSLNHPSELNREGDGQEQQLSNQPQRFRP) form a disordered region. The interval 208-758 (MAANRPGGGY…WSQDYGDITI (551 aa)) is sufficient for interaction with microtubules and microtubule severing. Residues 233–308 (HRRAFEYISK…SMARDRLHFL (76 aa)) form the MIT domain. Residues 353 to 454 (RVRSSGYGPK…GPSGSGASTP (102 aa)) form a disordered region. 2 stretches are compositionally biased toward polar residues: residues 390 to 406 (NKSQTLPRNLGSKTSVG) and 425 to 454 (QFSSGRNTPPQRSRTPINNNGPSGSGASTP). Residues 443–455 (NNGPSGSGASTPV) are required for interaction with microtubules. 523–530 (GPPGNGKT) lines the ATP pocket.

The protein belongs to the AAA ATPase family. Spastin subfamily. In terms of assembly, homohexamer. The homohexamer is stabilized by ATP-binding. The homohexamer may adopt a ring conformation through which microtubules pass prior to being severed. Interacts with microtubules. Interacts with atl; may be involved in microtubule dynamics.

It is found in the membrane. It localises to the cytoplasm. The protein resides in the cytoskeleton. Its subcellular location is the microtubule organizing center. The protein localises to the centrosome. It is found in the chromosome. It localises to the lipid droplet. The catalysed reaction is n ATP + n H2O + a microtubule = n ADP + n phosphate + (n+1) alpha/beta tubulin heterodimers.. In terms of biological role, ATP-dependent microtubule severing protein. Stimulates microtubule minus-end depolymerization and poleward microtubule flux in the mitotic spindle. Regulates microtubule stability in the neuromuscular junction synapse. Involved in lipid metabolism by regulating the size and distribution of lipid droplets. Involved in axon regeneration by regulating microtubule severing. The chain is Spastin from Drosophila sechellia (Fruit fly).